We begin with the raw amino-acid sequence, 392 residues long: MRDVAIIGYGQTKFGELWERSFRSLIVEAGVKAVEAAGIDGKDIDEMYVGNMSAGLFVGQEHIASLIAEHAGLNPIPSTRVEAACASGSLALRQAVLNVASGASDVVLVGGVEKMTDVVDATSAISSASDQEWEALFGATFPSLYAMMAQRYMYEYGLTLEELSMWSVIMHENASKNRYAQFPFKVTLEQVLNSSPVAEPLRLLHCSPVSDGAAALIVCEAEKAKEFVNKDDIIYIKASVQASDTIALHSRESITSLKAAKVASEKAYKMANIEPKDVDVAEVHDCFAINGLILMEELGFCKKGEAGKIVYDKKIAIDYDGFPAVNPSGGLKAAGHALGATGIRQVGEIYWQLKQDKEVKDRQVEIKNGYGITVNVGGTGGTVCIHILSDKR.

The Acyl-thioester intermediate role is filled by Cys-85. Residues Cys-206, Ser-207, Val-209, and Lys-332 each contribute to the CoA site. His-336 serves as the catalytic Proton acceptor.

This sequence belongs to the thiolase-like superfamily. Thiolase family. As to quaternary structure, interacts with HMG-CoA synthase (HMGCS) that catalyzes the second step in the pathway and with a DUF35 protein. The acetoacetyl-CoA thiolase/HMG-CoA synthase complex channels the intermediate via a fused CoA-binding site, which allows for efficient coupling of the endergonic thiolase reaction with the exergonic HMGCS reaction.

The enzyme catalyses 2 acetyl-CoA = acetoacetyl-CoA + CoA. It participates in metabolic intermediate biosynthesis; (R)-mevalonate biosynthesis; (R)-mevalonate from acetyl-CoA: step 1/3. Catalyzes the condensation of two acetyl-coA molecules into acetoacetyl-CoA. Functions in the mevalonate (MVA) pathway leading to isopentenyl diphosphate (IPP), a key precursor for the biosynthesis of isoprenoid compounds that are building blocks of archaeal membrane lipids. This chain is Acetyl-CoA acetyltransferase, found in Methanocaldococcus jannaschii (strain ATCC 43067 / DSM 2661 / JAL-1 / JCM 10045 / NBRC 100440) (Methanococcus jannaschii).